The sequence spans 688 residues: Glycine--tRNA ligase beta subunit (688 aa).

Belongs to the class-II aminoacyl-tRNA synthetase family. As to quaternary structure, tetramer of two alpha and two beta subunits.

Its subcellular location is the cytoplasm. The enzyme catalyses tRNA(Gly) + glycine + ATP = glycyl-tRNA(Gly) + AMP + diphosphate. The protein is Glycine--tRNA ligase beta subunit of Listeria monocytogenes serotype 4a (strain HCC23).